The primary structure comprises 429 residues: Glutamate-1-semialdehyde 2,1-aminomutase 1 (429 aa).

Lysine 268 is modified (N6-(pyridoxal phosphate)lysine).

Belongs to the class-III pyridoxal-phosphate-dependent aminotransferase family. HemL subfamily. Homodimer. Requires pyridoxal 5'-phosphate as cofactor.

The protein resides in the cytoplasm. The enzyme catalyses (S)-4-amino-5-oxopentanoate = 5-aminolevulinate. The protein operates within porphyrin-containing compound metabolism; protoporphyrin-IX biosynthesis; 5-aminolevulinate from L-glutamyl-tRNA(Glu): step 2/2. The chain is Glutamate-1-semialdehyde 2,1-aminomutase 1 from Listeria welshimeri serovar 6b (strain ATCC 35897 / DSM 20650 / CCUG 15529 / CIP 8149 / NCTC 11857 / SLCC 5334 / V8).